Here is a 214-residue protein sequence, read N- to C-terminus: Riboflavin kinase (214 aa).

Residues 1–26 (MRPDGPRDPVAGPDSGPEPPYPVRLS) form a disordered region. 2 residues coordinate Mg(2+): threonine 44 and asparagine 46. Residue glutamate 116 is the Nucleophile of the active site.

This sequence belongs to the flavokinase family. The cofactor is Zn(2+). Mg(2+) serves as cofactor.

It catalyses the reaction riboflavin + ATP = FMN + ADP + H(+). The protein operates within cofactor biosynthesis; FMN biosynthesis; FMN from riboflavin (ATP route): step 1/1. In terms of biological role, catalyzes the phosphorylation of riboflavin (vitamin B2) to form flavin mononucleotide (FMN) coenzyme. The protein is Riboflavin kinase (fmn1) of Aspergillus fumigatus (strain ATCC MYA-4609 / CBS 101355 / FGSC A1100 / Af293) (Neosartorya fumigata).